The sequence spans 558 residues: Arginine--tRNA ligase (558 aa).

Residues 134-144 (ANPTGPMVLVQ) carry the 'HIGH' region motif.

Belongs to the class-I aminoacyl-tRNA synthetase family. In terms of assembly, monomer.

Its subcellular location is the cytoplasm. The catalysed reaction is tRNA(Arg) + L-arginine + ATP = L-arginyl-tRNA(Arg) + AMP + diphosphate. This is Arginine--tRNA ligase from Symbiobacterium thermophilum (strain DSM 24528 / JCM 14929 / IAM 14863 / T).